The following is a 132-amino-acid chain: Small ribosomal subunit protein uS11 (132 aa).

Belongs to the universal ribosomal protein uS11 family. In terms of assembly, part of the 30S ribosomal subunit. Interacts with proteins S7 and S18. Binds to IF-3.

In terms of biological role, located on the platform of the 30S subunit, it bridges several disparate RNA helices of the 16S rRNA. Forms part of the Shine-Dalgarno cleft in the 70S ribosome. This Lachnoclostridium phytofermentans (strain ATCC 700394 / DSM 18823 / ISDg) (Clostridium phytofermentans) protein is Small ribosomal subunit protein uS11.